The primary structure comprises 462 residues: Centrosomal protein of 55 kDa (462 aa).

Residues 1 to 11 (MSSRSPKDLIK) are compositionally biased toward basic and acidic residues. Residues 1–26 (MSSRSPKDLIKSKWGSRPSSSKSDTA) are disordered. The span at 12–23 (SKWGSRPSSSKS) shows a compositional bias: low complexity. Residues 50 to 400 (KMAEKGRSRL…TQLESLKQLH (351 aa)) are a coiled coil. Phosphoserine occurs at positions 96 and 99. Positions 157–235 (ANCFNSSMNS…EGYLQVEKQK (79 aa)) are interaction with TSG101. Residues 160 to 214 (FNSSMNSIHEKEMQLKDALEKNQQWLVYDQQREAYVKGLLAKIFELEKRTETAAA) form an interaction with PDCD6IP region. The tract at residues 354-462 (QMQACTLDFE…LLVHVEYCMK (109 aa)) is required for localization to the interphase centrosome and to the midbody during cytokinesis. The tract at residues 410–430 (PLQREPESRVKATSPKSPSAA) is disordered. A phosphoserine mark is found at Ser423, Ser426, and Ser428. At Ser434 the chain carries Phosphoserine; by PLK1.

As to quaternary structure, homodimer. Interacts (phosphorylated on Ser-423 and Ser-426) with PLK1; the interaction is indirect via the MTMR3:MTMR4 heterooligomer, occurs during early mitosis, regulates the phosphorylation of CEP55 by PLK1 and its recruitment to the midbody where it can mediate cell abscission. Interacts with AKAP9/CG-NAP; the interaction occurs in interphase and is lost upon mitotic entry. Interacts with PCNT/Kendrin; the interaction occurs in interphase and is lost upon mitotic entry. Directly interacts with PDCD6IP; this interaction is required for PDCD6IP targeting to the midbody; CEP55 binds PDCD6IP in a 2:1 stoichiometry; PDCD6IP competes with TSG101 for the same binding site. Interacts with TSG101; TSG101 competes with PDCD6IP for the same binding site; interaction is required for cytokinesis. Interacts with MVB12A, VPS37B, VPS37C and VPS28. Post-translationally, there is a hierachy of phosphorylation, where both Ser-423 and Ser-426 are phosphorylated at the onset of mitosis, prior to Ser-434. Phosphorylation at Ser-423 and Ser-426 is required for dissociation from the centrosome at the G2/M boundary. Phosphorylation at the 3 sites, Ser-423, Ser-426 and Ser-434, is required for protein function at the final stages of cell division to complete cytokinesis successfully.

It is found in the cytoplasm. The protein resides in the cytoskeleton. The protein localises to the microtubule organizing center. Its subcellular location is the centrosome. It localises to the centriole. It is found in the cleavage furrow. The protein resides in the midbody. The protein localises to the midbody ring. Plays a role in mitotic exit and cytokinesis. Recruits PDCD6IP and TSG101 to midbody during cytokinesis. Required for successful completion of cytokinesis. Not required for microtubule nucleation. Plays a role in the development of the brain and kidney. The polypeptide is Centrosomal protein of 55 kDa (Mus musculus (Mouse)).